The following is a 194-amino-acid chain: Peptidyl-tRNA hydrolase (194 aa).

Tyr-17 is a binding site for tRNA. His-22 (proton acceptor) is an active-site residue. Residues Phe-68, Asn-70, and Asn-116 each coordinate tRNA.

It belongs to the PTH family. In terms of assembly, monomer.

The protein resides in the cytoplasm. The enzyme catalyses an N-acyl-L-alpha-aminoacyl-tRNA + H2O = an N-acyl-L-amino acid + a tRNA + H(+). Functionally, hydrolyzes ribosome-free peptidyl-tRNAs (with 1 or more amino acids incorporated), which drop off the ribosome during protein synthesis, or as a result of ribosome stalling. Its function is as follows. Catalyzes the release of premature peptidyl moieties from peptidyl-tRNA molecules trapped in stalled 50S ribosomal subunits, and thus maintains levels of free tRNAs and 50S ribosomes. The polypeptide is Peptidyl-tRNA hydrolase (Pasteurella multocida (strain Pm70)).